Here is a 398-residue protein sequence, read N- to C-terminus: Tryptophan synthase beta chain (398 aa).

Residue Lys88 is modified to N6-(pyridoxal phosphate)lysine.

Belongs to the TrpB family. In terms of assembly, tetramer of two alpha and two beta chains. It depends on pyridoxal 5'-phosphate as a cofactor.

The catalysed reaction is (1S,2R)-1-C-(indol-3-yl)glycerol 3-phosphate + L-serine = D-glyceraldehyde 3-phosphate + L-tryptophan + H2O. It functions in the pathway amino-acid biosynthesis; L-tryptophan biosynthesis; L-tryptophan from chorismate: step 5/5. The beta subunit is responsible for the synthesis of L-tryptophan from indole and L-serine. This Histophilus somni (strain 2336) (Haemophilus somnus) protein is Tryptophan synthase beta chain.